The primary structure comprises 467 residues: Heat shock factor protein 3 (467 aa).

A DNA-binding region spans residues 16–121 (VPGFLAKLWA…LLENIKRKVS (106 aa)). Residues 128-201 (LKVCAEDLHK…LSLMRGNYIV (74 aa)) are hydrophobic repeat HR-A/B. The interval 364-389 (IQDFLNCIDASLEELQAMLSGKQYSF) is hydrophobic repeat HR-C. The segment at 427–449 (EDLGASERETAGSKGGQEGTESC) is disordered.

This sequence belongs to the HSF family. In terms of assembly, homotrimer. In terms of tissue distribution, expressed in most tissues. High levels are found in erythrocytes and low levels in liver.

It is found in the cytoplasm. The protein localises to the nucleus. DNA-binding protein that specifically binds heat shock promoter elements (HSE) and activates transcription. HSF3 binds DNA constitutively only when the C-terminal region is deleted. This Gallus gallus (Chicken) protein is Heat shock factor protein 3 (HSF3).